Here is a 142-residue protein sequence, read N- to C-terminus: 3-hydroxyacyl-[acyl-carrier-protein] dehydratase FabZ (142 aa).

Histidine 47 is an active-site residue.

It belongs to the thioester dehydratase family. FabZ subfamily.

It localises to the cytoplasm. The enzyme catalyses a (3R)-hydroxyacyl-[ACP] = a (2E)-enoyl-[ACP] + H2O. Functionally, involved in unsaturated fatty acids biosynthesis. Catalyzes the dehydration of short chain beta-hydroxyacyl-ACPs and long chain saturated and unsaturated beta-hydroxyacyl-ACPs. The protein is 3-hydroxyacyl-[acyl-carrier-protein] dehydratase FabZ of Coxiella burnetii (strain RSA 331 / Henzerling II).